Reading from the N-terminus, the 364-residue chain is Mannose-1-phosphate guanyltransferase (364 aa).

Belongs to the transferase hexapeptide repeat family.

The protein resides in the cytoplasm. The enzyme catalyses alpha-D-mannose 1-phosphate + GTP + H(+) = GDP-alpha-D-mannose + diphosphate. It functions in the pathway nucleotide-sugar biosynthesis; GDP-alpha-D-mannose biosynthesis; GDP-alpha-D-mannose from alpha-D-mannose 1-phosphate (GTP route): step 1/1. Its function is as follows. Involved in cell wall synthesis where it is required for glycosylation. Involved in cell cycle progression through cell-size checkpoint. The protein is Mannose-1-phosphate guanyltransferase (mpg1) of Hypocrea jecorina (Trichoderma reesei).